A 154-amino-acid polypeptide reads, in one-letter code: Putative pre-16S rRNA nuclease (154 aa).

Belongs to the YqgF nuclease family.

It is found in the cytoplasm. Functionally, could be a nuclease involved in processing of the 5'-end of pre-16S rRNA. The polypeptide is Putative pre-16S rRNA nuclease (Rickettsia conorii (strain ATCC VR-613 / Malish 7)).